The following is a 1398-amino-acid chain: DNA-directed RNA polymerase subunit beta' (1398 aa).

Zn(2+) is bound by residues Cys71, Cys73, Cys86, and Cys89. Residues Asp462, Asp464, and Asp466 each coordinate Mg(2+). Cys810, Cys883, Cys890, and Cys893 together coordinate Zn(2+). Residues 1377 to 1398 are disordered; it reads EKQAAVVSPAPEAELPALPPAE. The segment covering 1380-1392 has biased composition (low complexity); the sequence is AAVVSPAPEAELP.

The protein belongs to the RNA polymerase beta' chain family. The RNAP catalytic core consists of 2 alpha, 1 beta, 1 beta' and 1 omega subunit. When a sigma factor is associated with the core the holoenzyme is formed, which can initiate transcription. Mg(2+) is required as a cofactor. Zn(2+) serves as cofactor.

It carries out the reaction RNA(n) + a ribonucleoside 5'-triphosphate = RNA(n+1) + diphosphate. In terms of biological role, DNA-dependent RNA polymerase catalyzes the transcription of DNA into RNA using the four ribonucleoside triphosphates as substrates. The chain is DNA-directed RNA polymerase subunit beta' from Bradyrhizobium diazoefficiens (strain JCM 10833 / BCRC 13528 / IAM 13628 / NBRC 14792 / USDA 110).